The primary structure comprises 103 residues: Truncated secreted TNF-receptor-like protein A53R (103 aa).

Residues 36 to 73 (SCDKGEYLDKRHNQCCNRCPPGEFAKVRCNGNDNTKCE) form a TNFR-Cys 1 repeat. Disulfide bonds link C37–C50, C51–C64, and C54–C72. The TNFR-Cys 2; truncated repeat unit spans residues 74 to 103 (RCPPHTYTTIPIILMDVINVENAQPDHLIR).

The protein belongs to the poxviridae A53R protein family.

The chain is Truncated secreted TNF-receptor-like protein A53R from Vaccinia virus (strain Western Reserve) (VACV).